The sequence spans 484 residues: Allantoinase, mitochondrial (484 aa).

His76, His78, Lys163, His199, His251, and Asp324 together coordinate Zn(2+). The residue at position 163 (Lys163) is an N6-carboxylysine.

It belongs to the metallo-dependent hydrolases superfamily. Allantoinase family. As to quaternary structure, homotetramer. It depends on Zn(2+) as a cofactor. Post-translationally, carboxylation allows a single lysine to coordinate two zinc ions. In terms of tissue distribution, liver and kidney.

Its subcellular location is the mitochondrion. The enzyme catalyses (S)-allantoin + H2O = allantoate + H(+). Its pathway is nitrogen metabolism; (S)-allantoin degradation; allantoate from (S)-allantoin: step 1/1. The sequence is that of Allantoinase, mitochondrial (ALN) from Aquarana catesbeiana (American bullfrog).